We begin with the raw amino-acid sequence, 231 residues long: LexA repressor (231 aa).

Residues 1 to 24 (MTDRKEHKMKPGRRPTEGMTPSQE) form a disordered region. The H-T-H motif DNA-binding region spans 43–62 (VKEIAEALGMKTPSAHEQVQ). Residues Ser146 and Lys183 each act as for autocatalytic cleavage activity in the active site.

It belongs to the peptidase S24 family. In terms of assembly, homodimer.

It carries out the reaction Hydrolysis of Ala-|-Gly bond in repressor LexA.. Its function is as follows. Represses a number of genes involved in the response to DNA damage (SOS response), including recA and lexA. In the presence of single-stranded DNA, RecA interacts with LexA causing an autocatalytic cleavage which disrupts the DNA-binding part of LexA, leading to derepression of the SOS regulon and eventually DNA repair. This Magnetococcus marinus (strain ATCC BAA-1437 / JCM 17883 / MC-1) protein is LexA repressor.